Here is a 357-residue protein sequence, read N- to C-terminus: Homoserine O-succinyltransferase (357 aa).

Cys146 acts as the Acyl-thioester intermediate in catalysis. 2 residues coordinate substrate: Lys167 and Ser196. His239 acts as the Proton acceptor in catalysis. Glu241 is an active-site residue. Arg253 contacts substrate.

It belongs to the MetA family.

It localises to the cytoplasm. The enzyme catalyses L-homoserine + succinyl-CoA = O-succinyl-L-homoserine + CoA. It functions in the pathway amino-acid biosynthesis; L-methionine biosynthesis via de novo pathway; O-succinyl-L-homoserine from L-homoserine: step 1/1. Transfers a succinyl group from succinyl-CoA to L-homoserine, forming succinyl-L-homoserine. The sequence is that of Homoserine O-succinyltransferase from Allochromatium vinosum (strain ATCC 17899 / DSM 180 / NBRC 103801 / NCIMB 10441 / D) (Chromatium vinosum).